We begin with the raw amino-acid sequence, 105 residues long: Heat shock protein HspQ (105 aa).

A disordered region spans residues 74-105 (SSELQDERPEQPSMDELAQTIRKQRQAPRLRN). A compositionally biased stretch (basic residues) spans 95-105 (RKQRQAPRLRN).

This sequence belongs to the HspQ family.

The protein localises to the cytoplasm. In terms of biological role, involved in the degradation of certain denaturated proteins, including DnaA, during heat shock stress. This Shigella dysenteriae serotype 1 (strain Sd197) protein is Heat shock protein HspQ.